The sequence spans 202 residues: Large ribosomal subunit protein bL25 (202 aa).

The protein belongs to the bacterial ribosomal protein bL25 family. CTC subfamily. Part of the 50S ribosomal subunit; part of the 5S rRNA/L5/L18/L25 subcomplex. Contacts the 5S rRNA. Binds to the 5S rRNA independently of L5 and L18.

Its function is as follows. This is one of the proteins that binds to the 5S RNA in the ribosome where it forms part of the central protuberance. The chain is Large ribosomal subunit protein bL25 from Burkholderia ambifaria (strain MC40-6).